The primary structure comprises 123 residues: MATLANLTQTLEDAFKKIFITYMDSWRRNTTAEEQALQARVDAENFYYVILYLMVMIGMFSFIVVAILVSTVKSKRREHSQHPYHQYIVEDWQEKYKSQILHLEDSKATIHENMGATGFTVSP.

Asn6 and Asn29 each carry an N-linked (GlcNAc...) asparagine glycan. The helical transmembrane segment at 49–69 (VILYLMVMIGMFSFIVVAILV) threads the bilayer. Residues 70–123 (STVKSKRREHSQHPYHQYIVEDWQEKYKSQILHLEDSKATIHENMGATGFTVSP) lie on the Cytoplasmic side of the membrane.

It belongs to the potassium channel KCNE family. Interacts with KCNB1. Associates with KCNH2/ERG1. May associate with KCNQ2 and KCNQ3. Associates with HCN1 and probably HCN2. Heteromultimer with KCNC2. Interacts with KCNC2. Interacts with KCNQ1. Forms a heterooligomer complex with KCNQ1 that targets to the membrane raft and leading to currents with an apparently instantaneous activation, a rapid deactivation process and a linear current-voltage relationship and decreases the amplitude of the outward current.

It localises to the cell membrane. The protein resides in the apical cell membrane. Its function is as follows. Ancillary protein that functions as a regulatory subunit of the voltage-gated potassium (Kv) channel complex composed of pore-forming and potassium-conducting alpha subunits and of regulatory beta subunits. KCNE2 beta subunit modulates the gating kinetics and enhances stability of the channel complex. Alters the gating of the delayed rectifier Kv channel containing KCNB1 alpha subunit. Associates with KCNH2/HERG alpha subunit Kv channel to form the rapidly activating component of the delayed rectifying potassium current (IKr) in heart. May associate with KCNQ2 and/or KCNQ3 alpha subunits to modulate the native M-type current. May associate with HCN1 and HCN2 channel subunits to increase potassium current. Forms a heterooligomer complex with KCNQ1/KVLQT1 alpha subunits which leads to currents with an apparently instantaneous activation, a rapid deactivation process and a linear current-voltage relationship and decreases the amplitude of the outward current. KCNQ1-KCNE2 channel associates with Na(+)-coupled myo-inositol symporter in the apical membrane of choroid plexus epithelium and regulates the myo-inositol gradient between blood and cerebrospinal fluid with an impact on neuron excitability. The sequence is that of Potassium voltage-gated channel subfamily E member 2 from Mus musculus (Mouse).